A 365-amino-acid polypeptide reads, in one-letter code: tRNA/tmRNA (uracil-C(5))-methyltransferase (365 aa).

S-adenosyl-L-methionine-binding residues include Gln189, Tyr217, Asn222, Glu238, and Asp298. Cys323 (nucleophile) is an active-site residue. The Proton acceptor role is filled by Glu357.

It belongs to the class I-like SAM-binding methyltransferase superfamily. RNA M5U methyltransferase family. TrmA subfamily.

It carries out the reaction uridine(54) in tRNA + S-adenosyl-L-methionine = 5-methyluridine(54) in tRNA + S-adenosyl-L-homocysteine + H(+). The catalysed reaction is uridine(341) in tmRNA + S-adenosyl-L-methionine = 5-methyluridine(341) in tmRNA + S-adenosyl-L-homocysteine + H(+). Its function is as follows. Dual-specificity methyltransferase that catalyzes the formation of 5-methyluridine at position 54 (m5U54) in all tRNAs, and that of position 341 (m5U341) in tmRNA (transfer-mRNA). The chain is tRNA/tmRNA (uracil-C(5))-methyltransferase from Shewanella piezotolerans (strain WP3 / JCM 13877).